The chain runs to 143 residues: AP-2 complex subunit sigma (143 aa).

The protein belongs to the adaptor complexes small subunit family. Adaptor protein complex 2 (AP-2) is a heterotetramer composed of two large adaptins (alpha-type subunit APL3 and beta-type subunit APL1), a medium chain (mu-type subunit APM4) and a small adaptin (sigma-type subunit APS2).

The protein localises to the cell membrane. It localises to the membrane. The protein resides in the coated pit. Its function is as follows. Component of the adaptor complexes which link clathrin to receptors in coated vesicles. Clathrin-associated protein complexes are believed to interact with the cytoplasmic tails of membrane proteins, leading to their selection and concentration. The polypeptide is AP-2 complex subunit sigma (aps-2) (Neurospora crassa (strain ATCC 24698 / 74-OR23-1A / CBS 708.71 / DSM 1257 / FGSC 987)).